The following is a 181-amino-acid chain: Cytidylate kinase (181 aa).

An ATP-binding site is contributed by 12–20 (GLAGSGTTT).

It belongs to the cytidylate kinase family. Type 2 subfamily.

Its subcellular location is the cytoplasm. It catalyses the reaction CMP + ATP = CDP + ADP. The catalysed reaction is dCMP + ATP = dCDP + ADP. The polypeptide is Cytidylate kinase (cmk) (Pyrococcus abyssi (strain GE5 / Orsay)).